The primary structure comprises 103 residues: Small ribosomal subunit protein uS10 (103 aa).

Belongs to the universal ribosomal protein uS10 family. In terms of assembly, part of the 30S ribosomal subunit.

Involved in the binding of tRNA to the ribosomes. This is Small ribosomal subunit protein uS10 from Neisseria meningitidis serogroup C / serotype 2a (strain ATCC 700532 / DSM 15464 / FAM18).